We begin with the raw amino-acid sequence, 299 residues long: Oxygen-dependent coproporphyrinogen-III oxidase (299 aa).

S92 is a substrate binding site. 2 residues coordinate a divalent metal cation: H96 and H106. Catalysis depends on H106, which acts as the Proton donor. Substrate is bound at residue 108 to 110 (NVR). H145 and H175 together coordinate a divalent metal cation. Positions 240–275 (YVEFNLVWDRGTLFGLQTGGRTESILMSMPPLVRWE) are important for dimerization. 258–260 (GGR) lines the substrate pocket.

It belongs to the aerobic coproporphyrinogen-III oxidase family. As to quaternary structure, homodimer. A divalent metal cation serves as cofactor.

The protein resides in the cytoplasm. It carries out the reaction coproporphyrinogen III + O2 + 2 H(+) = protoporphyrinogen IX + 2 CO2 + 2 H2O. The protein operates within porphyrin-containing compound metabolism; protoporphyrin-IX biosynthesis; protoporphyrinogen-IX from coproporphyrinogen-III (O2 route): step 1/1. Its function is as follows. Involved in the heme biosynthesis. Catalyzes the aerobic oxidative decarboxylation of propionate groups of rings A and B of coproporphyrinogen-III to yield the vinyl groups in protoporphyrinogen-IX. This is Oxygen-dependent coproporphyrinogen-III oxidase from Salmonella arizonae (strain ATCC BAA-731 / CDC346-86 / RSK2980).